Consider the following 152-residue polypeptide: Putative aluminum-activated malate transporter 11 (152 aa).

Helical transmembrane passes span 48 to 68 (VIHA…YFME) and 78 to 98 (AIWA…VEGL).

This sequence belongs to the aromatic acid exporter (TC 2.A.85) family.

The protein resides in the membrane. Malate transporter. In Arabidopsis thaliana (Mouse-ear cress), this protein is Putative aluminum-activated malate transporter 11 (ALMT11).